Reading from the N-terminus, the 370-residue chain is Protein DVU_0535 (370 aa).

Residues 1-258 (MDRRRFLTLL…EELGTKSAPE (258 aa)) are Cytoplasmic-facing. 3 consecutive 4Fe-4S ferredoxin-type domains span residues 40–70 (YGVL…APKA), 101–132 (DHPV…KNPD), and 133–162 (GSVT…FQYA). Positions 49, 52, 55, 59, 110, 113, 118, 122, 142, 145, 148, 152, 172, 175, 187, and 191 each coordinate [4Fe-4S] cluster. The helical transmembrane segment at 259–284 (YTAGALGAVPMVVGIWPILLTGAYAI) threads the bilayer. The Periplasmic segment spans residues 285 to 370 (TKRKEKIAAE…DDAGKPGEDA (86 aa)). A compositionally biased stretch (basic and acidic residues) spans 345–355 (FEEELAAKEQP). Residues 345 to 370 (FEEELAAKEQPEAPEGDDAGKPGEDA) form a disordered region.

The protein localises to the cell membrane. HMWC (high-molecular-weight cytochrome c precursor), ORF2, ORF3, ORF4, ORF5, ORF6 in the HMC operon form a transmembrane protein complex that allows electron flow from the periplasmic hydrogenase to the cytoplasmic enzymes that catalyze reduction of sulfates. ORF2 is a transmembrane redox protein. The sequence is that of Protein DVU_0535 from Nitratidesulfovibrio vulgaris (strain ATCC 29579 / DSM 644 / CCUG 34227 / NCIMB 8303 / VKM B-1760 / Hildenborough) (Desulfovibrio vulgaris).